An 878-amino-acid polypeptide reads, in one-letter code: Phosphoenolpyruvate carboxylase (878 aa).

Residues His137 and Lys545 contribute to the active site.

Belongs to the PEPCase type 1 family. Mg(2+) is required as a cofactor.

The catalysed reaction is oxaloacetate + phosphate = phosphoenolpyruvate + hydrogencarbonate. Its function is as follows. Forms oxaloacetate, a four-carbon dicarboxylic acid source for the tricarboxylic acid cycle. The chain is Phosphoenolpyruvate carboxylase from Yersinia pseudotuberculosis serotype O:1b (strain IP 31758).